A 632-amino-acid polypeptide reads, in one-letter code: DNA ligase (632 aa).

Residues 45-49 (NEDYD) and 89-90 (SI) each bind NAD(+). Lys-127 serves as the catalytic N6-AMP-lysine intermediate. 3 residues coordinate NAD(+): Arg-143, Glu-174, and Lys-286. Zn(2+) is bound by residues Cys-374, Cys-377, Cys-390, and Cys-396. The BRCT domain occupies 561 to 632 (DKRIVFTGKM…EADYLSKITM (72 aa)).

Belongs to the NAD-dependent DNA ligase family. LigA subfamily. It depends on Mg(2+) as a cofactor. Mn(2+) is required as a cofactor.

The catalysed reaction is NAD(+) + (deoxyribonucleotide)n-3'-hydroxyl + 5'-phospho-(deoxyribonucleotide)m = (deoxyribonucleotide)n+m + AMP + beta-nicotinamide D-nucleotide.. DNA ligase that catalyzes the formation of phosphodiester linkages between 5'-phosphoryl and 3'-hydroxyl groups in double-stranded DNA using NAD as a coenzyme and as the energy source for the reaction. It is essential for DNA replication and repair of damaged DNA. The sequence is that of DNA ligase from Vesicomyosocius okutanii subsp. Calyptogena okutanii (strain HA).